The chain runs to 375 residues: Nucleosome assembly protein 1-like 4 (375 aa).

The interval 1-31 is disordered; sequence MADHSFSDGVPSDSVEAAKNASNTEKLTDQV. Ala2 carries the N-acetylalanine modification. Phosphoserine is present on residues Ser5, Ser7, and Ser12. A compositionally biased stretch (polar residues) spans 20 to 31; the sequence is NASNTEKLTDQV. At Thr51 the chain carries Phosphothreonine. Phosphoserine occurs at positions 53 and 54. Phosphothreonine is present on Thr58. Lys105 carries the N6-acetyllysine modification. The interval 116–137 is disordered; the sequence is PTDAESEWHSENEEEEKLAGDM. Positions 121–137 are enriched in basic and acidic residues; the sequence is SEWHSENEEEEKLAGDM. Ser125 is subject to Phosphoserine. At Lys146 the chain carries N6-acetyllysine. The short motif at 265 to 271 is the Nuclear localization signal element; that stretch reads IKKKQKH. Position 304 is a phosphoserine (Ser304). The segment at 339–375 is disordered; the sequence is AIEDDDNFEEGEEGEEEELEGDEEGEDEDDAEINPKV.

Belongs to the nucleosome assembly protein (NAP) family. As to quaternary structure, interacts with core (H2A, CD2APH2B, H3, H4) and linker (H1) histones. In terms of assembly, (Microbial infection) Interacts with Chikungunya virus non-structural protein 3 (via C-terminus). In terms of processing, phosphorylated at the G0/G1 boundary but it is not phosphorylated in S-phase. Phosphorylated protein remains in the cytoplasm in a complex with histones during the G0/G1 transition, whereas dephosphorylation triggers its transport into the nucleus at the G1/S-boundary. Post-translationally, polyglutamylated by TTLL4, a modification that occurs exclusively on glutamate residues and results in polyglutamate chains on the gamma-carboxyl group. Some residues may also be monoglycylated but not polyglycylated due to the absence of functional TTLL10 in human. As to expression, ubiquitous. Biallelically expressed in fetal and adult tissues. Highest levels in testis.

Its subcellular location is the nucleus. It is found in the cytoplasm. Functionally, acts as a histone chaperone in nucleosome assembly. In Homo sapiens (Human), this protein is Nucleosome assembly protein 1-like 4.